The chain runs to 248 residues: Proteasome subunit alpha (248 aa).

It belongs to the peptidase T1A family. In terms of assembly, the 20S proteasome core is composed of 14 alpha and 14 beta subunits that assemble into four stacked heptameric rings, resulting in a barrel-shaped structure. The two inner rings, each composed of seven catalytic beta subunits, are sandwiched by two outer rings, each composed of seven alpha subunits. The catalytic chamber with the active sites is on the inside of the barrel. Has a gated structure, the ends of the cylinder being occluded by the N-termini of the alpha-subunits. Is capped by the proteasome-associated ATPase, ARC.

It is found in the cytoplasm. It functions in the pathway protein degradation; proteasomal Pup-dependent pathway. Its activity is regulated as follows. The formation of the proteasomal ATPase ARC-20S proteasome complex, likely via the docking of the C-termini of ARC into the intersubunit pockets in the alpha-rings, may trigger opening of the gate for substrate entry. Interconversion between the open-gate and close-gate conformations leads to a dynamic regulation of the 20S proteasome proteolysis activity. Component of the proteasome core, a large protease complex with broad specificity involved in protein degradation. This is Proteasome subunit alpha from Mycobacterium bovis (strain BCG / Pasteur 1173P2).